The sequence spans 85 residues: Small ribosomal subunit protein uS17 (85 aa).

It belongs to the universal ribosomal protein uS17 family. In terms of assembly, part of the 30S ribosomal subunit.

In terms of biological role, one of the primary rRNA binding proteins, it binds specifically to the 5'-end of 16S ribosomal RNA. In Desulfosudis oleivorans (strain DSM 6200 / JCM 39069 / Hxd3) (Desulfococcus oleovorans), this protein is Small ribosomal subunit protein uS17.